Reading from the N-terminus, the 1491-residue chain is Chromosome partition protein MukB (1491 aa).

34–41 (GGNGAGKS) is an ATP binding site. Coiled coils occupy residues 302–418 (LIEQ…QYQQ), 488–600 (EVAR…RFES), 638–666 (ELEK…RLAS), 781–806 (RAAR…AKAS), 836–1109 (EQAL…DLRT), and 1210–1239 (VEAI…ISSD). The interval 667–784 (PGGSNDPRLK…AIPLFGRAAR (118 aa)) is flexible hinge. Residues 1059–1080 (QRRRDELQERLHTSRSRKSEYE) form a disordered region.

The protein belongs to the SMC family. MukB subfamily. As to quaternary structure, homodimerization via its hinge domain. Binds to DNA via its C-terminal region. Interacts, and probably forms a ternary complex, with MukE and MukF via its C-terminal region. The complex formation is stimulated by calcium or magnesium. Interacts with tubulin-related protein FtsZ.

The protein localises to the cytoplasm. It is found in the nucleoid. Its function is as follows. Plays a central role in chromosome condensation, segregation and cell cycle progression. Functions as a homodimer, which is essential for chromosome partition. Involved in negative DNA supercoiling in vivo, and by this means organize and compact chromosomes. May achieve or facilitate chromosome segregation by condensation DNA from both sides of a centrally located replisome during cell division. This is Chromosome partition protein MukB from Vibrio cholerae serotype O1 (strain ATCC 39541 / Classical Ogawa 395 / O395).